Reading from the N-terminus, the 189-residue chain is UPF0312 protein VIBHAR_05924 (189 aa).

Residues 1–22 (MKKSLFATGLAIAIALPFGANA) form the signal peptide.

It belongs to the UPF0312 family. Type 1 subfamily.

It localises to the periplasm. The protein is UPF0312 protein VIBHAR_05924 of Vibrio campbellii (strain ATCC BAA-1116).